We begin with the raw amino-acid sequence, 416 residues long: Sulfoquinovosyl glycerol-binding protein SmoF (416 aa).

An N-terminal signal peptide occupies residues Met-1 to Ala-29. Gln-40 contributes to the 3-(6-sulfo-alpha-D-quinovosyl)glycerol binding site. His-41 is a 6-sulfo-D-quinovose binding site. 3-(6-sulfo-alpha-D-quinovosyl)glycerol is bound by residues Ser-71, Asp-95, Asp-141, Gly-194, Thr-248, Gly-303, Trp-304, and Arg-373. 6-sulfo-D-quinovose is bound by residues Gly-303, Trp-304, and Arg-373.

Belongs to the bacterial solute-binding protein 1 family. The complex is probably composed of two ATP-binding proteins (SmoE), two transmembrane proteins (SmoG and SmoH) and a solute-binding protein (SmoF).

The protein localises to the periplasm. Functionally, part of the ABC transporter complex SmoEFGH involved in sulfoquinovosyl glycerol (SQGro) uptake. Binds sulfoquinovosyl glycerol (SQGro). Can also bind sulfoquinovose (SQ), methyl alpha-sulfoquinovoside (SQMe) and a short-chain derivative of sulfoquinovosyl diacylglycerol (SQDG). Cannot bind D-glucose and D-glucuronic acid. This Agrobacterium fabrum (strain C58 / ATCC 33970) (Agrobacterium tumefaciens (strain C58)) protein is Sulfoquinovosyl glycerol-binding protein SmoF.